The sequence spans 222 residues: Deoxyribose-phosphate aldolase (222 aa).

D90 functions as the Proton donor/acceptor in the catalytic mechanism. K152 serves as the catalytic Schiff-base intermediate with acetaldehyde. The active-site Proton donor/acceptor is the K181.

It belongs to the DeoC/FbaB aldolase family. DeoC type 1 subfamily.

It localises to the cytoplasm. It carries out the reaction 2-deoxy-D-ribose 5-phosphate = D-glyceraldehyde 3-phosphate + acetaldehyde. The protein operates within carbohydrate degradation; 2-deoxy-D-ribose 1-phosphate degradation; D-glyceraldehyde 3-phosphate and acetaldehyde from 2-deoxy-alpha-D-ribose 1-phosphate: step 2/2. Catalyzes a reversible aldol reaction between acetaldehyde and D-glyceraldehyde 3-phosphate to generate 2-deoxy-D-ribose 5-phosphate. The chain is Deoxyribose-phosphate aldolase from Pectobacterium carotovorum subsp. carotovorum (strain PC1).